The sequence spans 671 residues: UvrABC system protein B (671 aa).

The Helicase ATP-binding domain maps to 26 to 183; the sequence is EGLENGLAHQ…RRLSELQYSR (158 aa). Residue 39–46 participates in ATP binding; the sequence is GVTGSGKT. The Beta-hairpin motif lies at 92–115; the sequence is YYDYYQPEAYVPSSDTFIEKDASV. A Helicase C-terminal domain is found at 431–597; the sequence is QVDDLLSEIR…GLNKKIGDIL (167 aa). The 36-residue stretch at 631–666 folds into the UVR domain; that stretch reads DQKIRELEAKMYTYAQNLEFEQAAELRDQVHQLRQQ.

It belongs to the UvrB family. As to quaternary structure, forms a heterotetramer with UvrA during the search for lesions. Interacts with UvrC in an incision complex.

The protein localises to the cytoplasm. Its function is as follows. The UvrABC repair system catalyzes the recognition and processing of DNA lesions. A damage recognition complex composed of 2 UvrA and 2 UvrB subunits scans DNA for abnormalities. Upon binding of the UvrA(2)B(2) complex to a putative damaged site, the DNA wraps around one UvrB monomer. DNA wrap is dependent on ATP binding by UvrB and probably causes local melting of the DNA helix, facilitating insertion of UvrB beta-hairpin between the DNA strands. Then UvrB probes one DNA strand for the presence of a lesion. If a lesion is found the UvrA subunits dissociate and the UvrB-DNA preincision complex is formed. This complex is subsequently bound by UvrC and the second UvrB is released. If no lesion is found, the DNA wraps around the other UvrB subunit that will check the other stand for damage. The polypeptide is UvrABC system protein B (Yersinia pseudotuberculosis serotype IB (strain PB1/+)).